The sequence spans 131 residues: Small ribosomal subunit protein uS8 (131 aa).

Belongs to the universal ribosomal protein uS8 family. As to quaternary structure, part of the 30S ribosomal subunit. Contacts proteins S5 and S12.

Functionally, one of the primary rRNA binding proteins, it binds directly to 16S rRNA central domain where it helps coordinate assembly of the platform of the 30S subunit. This chain is Small ribosomal subunit protein uS8, found in Ralstonia pickettii (strain 12J).